Consider the following 308-residue polypeptide: Transaldolase (308 aa).

The active-site Schiff-base intermediate with substrate is the Lys125.

It belongs to the transaldolase family. Type 1 subfamily. In terms of assembly, homodimer.

The protein resides in the cytoplasm. It catalyses the reaction D-sedoheptulose 7-phosphate + D-glyceraldehyde 3-phosphate = D-erythrose 4-phosphate + beta-D-fructose 6-phosphate. Its pathway is carbohydrate degradation; pentose phosphate pathway; D-glyceraldehyde 3-phosphate and beta-D-fructose 6-phosphate from D-ribose 5-phosphate and D-xylulose 5-phosphate (non-oxidative stage): step 2/3. In terms of biological role, transaldolase is important for the balance of metabolites in the pentose-phosphate pathway. This Pseudomonas fluorescens (strain ATCC BAA-477 / NRRL B-23932 / Pf-5) protein is Transaldolase.